Consider the following 266-residue polypeptide: Small ribosomal subunit protein eS1 (266 aa).

The disordered stretch occupies residues 234–266; sequence EGGTGTATKATGDDTGAKVERADGYEPPIQETV. The segment covering 244–257 has biased composition (basic and acidic residues); the sequence is TGDDTGAKVERADG.

It belongs to the eukaryotic ribosomal protein eS1 family. As to quaternary structure, component of the small ribosomal subunit. Mature ribosomes consist of a small (40S) and a large (60S) subunit. The 40S subunit contains about 33 different proteins and 1 molecule of RNA (18S). The 60S subunit contains about 49 different proteins and 3 molecules of RNA (28S, 5.8S and 5S). Part of the small subunit (SSU) processome, composed of more than 70 proteins and the RNA chaperone small nucleolar RNA (snoRNA) U3.

The protein resides in the cytoplasm. It is found in the nucleus. It localises to the nucleolus. Its function is as follows. Component of the small ribosomal subunit. The ribosome is a large ribonucleoprotein complex responsible for the synthesis of proteins in the cell. Part of the small subunit (SSU) processome, first precursor of the small eukaryotic ribosomal subunit. During the assembly of the SSU processome in the nucleolus, many ribosome biogenesis factors, an RNA chaperone and ribosomal proteins associate with the nascent pre-rRNA and work in concert to generate RNA folding, modifications, rearrangements and cleavage as well as targeted degradation of pre-ribosomal RNA by the RNA exosome. May play a role during erythropoiesis. This chain is Small ribosomal subunit protein eS1 (rps3a), found in Solea senegalensis (Senegalese sole).